The sequence spans 186 residues: UPF0398 protein BPUM_1952 (186 aa).

Belongs to the UPF0398 family.

The chain is UPF0398 protein BPUM_1952 from Bacillus pumilus (strain SAFR-032).